Consider the following 560-residue polypeptide: Formate--tetrahydrofolate ligase (560 aa).

70-77 (TPAGEGKT) lines the ATP pocket.

The protein belongs to the formate--tetrahydrofolate ligase family.

The catalysed reaction is (6S)-5,6,7,8-tetrahydrofolate + formate + ATP = (6R)-10-formyltetrahydrofolate + ADP + phosphate. Its pathway is one-carbon metabolism; tetrahydrofolate interconversion. This Methanocorpusculum labreanum (strain ATCC 43576 / DSM 4855 / Z) protein is Formate--tetrahydrofolate ligase.